The following is an 820-amino-acid chain: SART-1 family protein DOT2 (820 aa).

3 stretches are compositionally biased toward basic and acidic residues: residues 1–156, 210–219, and 426–445; these read MEVE…DNRG, EEKRNAEKQR, and LGSRKDGRRQAMKEEKERIE. Disordered stretches follow at residues 1 to 177, 210 to 248, 420 to 445, 523 to 544, 564 to 617, 657 to 678, 729 to 748, and 762 to 820; these read MEVE…SALD, EEKRNAEKQRAQQLSRIFEEQDNLNQGENEDGEDGEHLS, GLGAEDLGSRKDGRRQAMKEEKERIE, SSTNQTTDDNTTTGDETQENTV, KPES…PDEN, KLVGIVDDDGGKESKDKESKDR, KLKQMKNSDTPSQSVQRMRE, and GHVK…RPKP. Ser22 is modified (phosphoserine). Coiled-coil stretches lie at residues 58–120, 171–235, and 433–510; these read RDKE…EKEK, KEAS…NLNQ, and RRQA…KEEA. Positions 525–543 are enriched in low complexity; it reads TNQTTDDNTTTGDETQENT. The segment covering 582–591 has biased composition (basic and acidic residues); the sequence is VEVKEEHPDG. Positions 596–606 are enriched in acidic residues; the sequence is NDTDMDAAEDS. 2 stretches are compositionally biased toward basic and acidic residues: residues 607–617 and 665–678; these read SDTKEITPDEN and DGGKESKDKESKDR. Composition is skewed to polar residues over residues 733–744 and 767–776; these read MKNSDTPSQSVQ and GQTSDPQSGF. The segment covering 792-807 has biased composition (basic and acidic residues); the sequence is GDRKVEHFLGIKRKSE.

Belongs to the SNU66/SART1 family. As to expression, expressed in lateral root cap, columella, meristem and quiescent center (QC). Expressed in young leaves.

The protein localises to the nucleus. Plays a role in root, shoot and flower development. Probably required for normal root and shoot meristem organization and maintenance and the proper expression of PIN and PLT genes. Involved in leaf vasculature patterning. The sequence is that of SART-1 family protein DOT2 from Arabidopsis thaliana (Mouse-ear cress).